Consider the following 298-residue polypeptide: 4-hydroxy-tetrahydrodipicolinate synthase (298 aa).

Thr-48 is a binding site for pyruvate. Residue Tyr-137 is the Proton donor/acceptor of the active site. Catalysis depends on Lys-166, which acts as the Schiff-base intermediate with substrate. Ile-207 lines the pyruvate pocket.

It belongs to the DapA family. In terms of assembly, homotetramer; dimer of dimers.

It localises to the cytoplasm. It carries out the reaction L-aspartate 4-semialdehyde + pyruvate = (2S,4S)-4-hydroxy-2,3,4,5-tetrahydrodipicolinate + H2O + H(+). It participates in amino-acid biosynthesis; L-lysine biosynthesis via DAP pathway; (S)-tetrahydrodipicolinate from L-aspartate: step 3/4. Catalyzes the condensation of (S)-aspartate-beta-semialdehyde [(S)-ASA] and pyruvate to 4-hydroxy-tetrahydrodipicolinate (HTPA). The polypeptide is 4-hydroxy-tetrahydrodipicolinate synthase (Campylobacter jejuni subsp. jejuni serotype O:6 (strain 81116 / NCTC 11828)).